The primary structure comprises 527 residues: UDP-glucuronosyltransferase 2A3 (527 aa).

Residues 1-23 form the signal peptide; it reads MRSEKSALVFLLLQLFCVGCGFC. The Extracellular segment spans residues 24-486; it reads GKVLVWPCDM…AAHNLTWFQH (463 aa). Asparagine 313 carries N-linked (GlcNAc...) asparagine glycosylation. Residues 487–507 form a helical membrane-spanning segment; that stretch reads YSIDVIGFLLACVATAIFLFT. Residues 508-523 are Cytoplasmic-facing; it reads KCCLFSCQKFNKTRKI.

It belongs to the UDP-glycosyltransferase family.

It localises to the membrane. The catalysed reaction is glucuronate acceptor + UDP-alpha-D-glucuronate = acceptor beta-D-glucuronoside + UDP + H(+). In terms of biological role, UDP-glucuronosyltransferases catalyze phase II biotransformation reactions in which lipophilic substrates are conjugated with glucuronic acid to increase water solubility and enhance excretion. They are of major importance in the conjugation and subsequent elimination of potentially toxic xenobiotics and endogenous compounds. The sequence is that of UDP-glucuronosyltransferase 2A3 (UGT2A3) from Pongo abelii (Sumatran orangutan).